The following is an 84-amino-acid chain: ATP synthase subunit c (84 aa).

Transmembrane regions (helical) follow at residues 9 to 29 (IIGA…GFAI) and 54 to 74 (IVAG…LLFI).

It belongs to the ATPase C chain family. As to quaternary structure, F-type ATPases have 2 components, F(1) - the catalytic core - and F(0) - the membrane proton channel. F(1) has five subunits: alpha(3), beta(3), gamma(1), delta(1), epsilon(1). F(0) has three main subunits: a(1), b(2) and c(10-14). The alpha and beta chains form an alternating ring which encloses part of the gamma chain. F(1) is attached to F(0) by a central stalk formed by the gamma and epsilon chains, while a peripheral stalk is formed by the delta and b chains.

It is found in the cell inner membrane. In terms of biological role, f(1)F(0) ATP synthase produces ATP from ADP in the presence of a proton or sodium gradient. F-type ATPases consist of two structural domains, F(1) containing the extramembraneous catalytic core and F(0) containing the membrane proton channel, linked together by a central stalk and a peripheral stalk. During catalysis, ATP synthesis in the catalytic domain of F(1) is coupled via a rotary mechanism of the central stalk subunits to proton translocation. Its function is as follows. Key component of the F(0) channel; it plays a direct role in translocation across the membrane. A homomeric c-ring of between 10-14 subunits forms the central stalk rotor element with the F(1) delta and epsilon subunits. In Glaesserella parasuis serovar 5 (strain SH0165) (Haemophilus parasuis), this protein is ATP synthase subunit c.